Consider the following 822-residue polypeptide: Protein smoothened (822 aa).

The N-terminal stretch at 1 to 28 (MSSKRPCSIVGSFWMLWIWTATSMVARA) is a signal peptide. Over 29-212 (VILHPNETIF…EDEHSDMHSY (184 aa)) the chain is Extracellular. Asn-34 carries an N-linked (GlcNAc...) asparagine glycan. Cystine bridges form between Cys-42-Cys-157, Cys-48-Cys-112, Cys-56-Cys-105, Cys-96-Cys-132, and Cys-125-Cys-147. The region spanning 43–160 (KKSTTCEVLK…EQFPKGCQNE (118 aa)) is the FZ domain. Asp-73 contributes to the cholesterol binding site. N-linked (GlcNAc...) asparagine glycosylation is present at Asn-167. Cystine bridges form between Cys-172-Cys-192, Cys-196-Cys-274, and Cys-293-Cys-369. A helical membrane pass occupies residues 213–233 (IAVFGTITLLCTFFTLATFLA). The Cytoplasmic portion of the chain corresponds to 234–241 (DWKNSNRY). The chain crosses the membrane as a helical span at residues 242–262 (PAVILFYVNACFFIGSIGWLA). Over 263-293 (QFMDGARNEIVCKSDNTMRLGEPSSTETLSC) the chain is Extracellular. Residues 294-314 (VIIFVIVYYSLMSGVIWFVML) traverse the membrane as a helical segment. The Cytoplasmic portion of the chain corresponds to 315–335 (TYAWHTSFKALGTTHQPLSGK). A helical transmembrane segment spans residues 336–356 (TSYFHLVTWSIPFILTVAILA). Over 357–381 (NSQVDADSVSGICFVGYRYYEYRAG) the chain is Extracellular. Residue Tyr-373 participates in cholesterol binding. A helical membrane pass occupies residues 382 to 402 (FVLAPIGFVLVIGGYFLIRGV). Residues 403-430 (MTLFSIKSNHPGLLSEKAASKINETMLR) lie on the Cytoplasmic side of the membrane. The helical transmembrane segment at 431 to 451 (LGIFGFLAFGFVLITFGCHFY) threads the bilayer. The Extracellular segment spans residues 452–503 (DFFNQAEWERSFREYVLCEANVTIAHQTNKPIPECAIKNRPSLLVGKINLFS). Cys-469 and Cys-486 are joined by a disulfide. Asn-472 carries an N-linked (GlcNAc...) asparagine glycan. Residues 504-524 (MFGTGIAMSTWVWTKATILIW) form a helical membrane-spanning segment. The Cytoplasmic portion of the chain corresponds to 525–822 (KRTWFRIIGR…AELLDADSDF (298 aa)). The disordered stretch occupies residues 645-687 (MMKRKKKKKKRRKEVRPAGPAADEGNPAYHRREFGPSAVPRLP). Over residues 647–658 (KRKKKKKKRRKE) the composition is skewed to basic residues.

The protein belongs to the G-protein coupled receptor Fz/Smo family. Monomer.

It is found in the cell membrane. The protein resides in the cell projection. Its subcellular location is the cilium. G protein-coupled receptor which associates with the patched protein (ptch) to transduce Hedgehog protein signaling. Binding of sonic hedgehog (shh) to its receptor patched prevents inhibition of smoothened (smo) by patched. When active, smo binds to and sequesters protein kinase A catalytic subunit prkaca at the cell membrane, preventing prkaca-mediated phosphorylation of gli transcription factors which releases the gli proteins from prkaca-mediated inhibition and allows for transcriptional activation of Hedgehog signaling pathway target genes. Required for the development of primary and secondary motoneurons but not for the specification of midbrain dopaminergic neurons or development of the medial floor plate. Required for induction of lateral floor plate and posterior motoneurons, anterior neural plate patterning, dorsoventral forebrain patterning, dorsoventral retinal patterning, optic stalk development, and formation of the forebrain primary axonal scaffold. Required to regulate the formation of a subset of cerebellar neurons by limiting wnt1 expression which controls cerebellar expression of transcription factor olig2. Required for development of the pancreas. Required for muscle development. Required for the formation of a single continuous intestinal lumen from multiple discontinuous lumens, probably by regulating remodeling through rab11a-mediated trafficking to facilitate lumen fusion. Required for development of the adenohypophysis. Required for anteroposterior patterning of the otic vesicle. Required for development of the anterior craniofacial skeleton. Required for patterning of the caudal fin. Required during gastrulation and early somitogenesis stages to promote cardiomyocyte formation by regulating the specification of myocardial progenitors. Required for induction of arterial endothelial cell formation by repressing venous cell fate. The chain is Protein smoothened from Danio rerio (Zebrafish).